A 169-amino-acid chain; its full sequence is Sorting nexin-24 (169 aa).

Residue methionine 1 is modified to N-acetylmethionine. One can recognise a PX domain in the interval 1–125; the sequence is MEVYIPSFRY…SFDETESEES (125 aa). The a 1,2-diacyl-sn-glycero-3-phospho-(1D-myo-inositol-3-phosphate) site is built by arginine 38, serine 40, lysine 61, and arginine 74. Phosphoserine is present on residues serine 113 and serine 116.

Belongs to the sorting nexin family.

The protein localises to the cytoplasmic vesicle membrane. In terms of biological role, may be involved in several stages of intracellular trafficking. The protein is Sorting nexin-24 (SNX24) of Bos taurus (Bovine).